Reading from the N-terminus, the 481-residue chain is 3-ketoacyl-CoA synthase 8 (481 aa).

2 helical membrane-spanning segments follow: residues 4-24 and 44-64; these read LKMV…AMKG and LQTI…YMLT. Positions 61 to 358 constitute an FAE domain; that stretch reads YMLTRPKPVY…FFITFVKKKY (298 aa). Residues Cys-213, His-292, His-376, His-380, His-409, and Asn-413 contribute to the active site.

The protein belongs to the thiolase-like superfamily. Chalcone/stilbene synthases family. As to expression, expressed in leaves and seedlings.

It localises to the endoplasmic reticulum membrane. The enzyme catalyses a very-long-chain acyl-CoA + malonyl-CoA + H(+) = a very-long-chain 3-oxoacyl-CoA + CO2 + CoA. It participates in lipid metabolism; fatty acid biosynthesis. This chain is 3-ketoacyl-CoA synthase 8, found in Arabidopsis thaliana (Mouse-ear cress).